We begin with the raw amino-acid sequence, 146 residues long: 3-dehydroquinate dehydratase (146 aa).

Tyr-23 serves as the catalytic Proton acceptor. Positions 74, 80, and 87 each coordinate substrate. His-100 acts as the Proton donor in catalysis. Substrate-binding positions include 101 to 102 (IS) and Arg-111.

It belongs to the type-II 3-dehydroquinase family. In terms of assembly, homododecamer.

It carries out the reaction 3-dehydroquinate = 3-dehydroshikimate + H2O. The protein operates within metabolic intermediate biosynthesis; chorismate biosynthesis; chorismate from D-erythrose 4-phosphate and phosphoenolpyruvate: step 3/7. Catalyzes a trans-dehydration via an enolate intermediate. The polypeptide is 3-dehydroquinate dehydratase (Bacillus cereus (strain B4264)).